The chain runs to 261 residues: UPF0246 protein Vapar_1301 (261 aa).

This sequence belongs to the UPF0246 family.

This is UPF0246 protein Vapar_1301 from Variovorax paradoxus (strain S110).